We begin with the raw amino-acid sequence, 621 residues long: tRNA uridine 5-carboxymethylaminomethyl modification enzyme MnmG (621 aa).

17-22 serves as a coordination point for FAD; that stretch reads GGGHAG. 276–290 lines the NAD(+) pocket; it reads GPRYCPSIEDKIMKF.

It belongs to the MnmG family. Homodimer. Heterotetramer of two MnmE and two MnmG subunits. FAD serves as cofactor.

The protein localises to the cytoplasm. In terms of biological role, NAD-binding protein involved in the addition of a carboxymethylaminomethyl (cmnm) group at the wobble position (U34) of certain tRNAs, forming tRNA-cmnm(5)s(2)U34. The polypeptide is tRNA uridine 5-carboxymethylaminomethyl modification enzyme MnmG (Zymomonas mobilis subsp. mobilis (strain ATCC 31821 / ZM4 / CP4)).